Consider the following 352-residue polypeptide: MGIDKRKDDHIYLASSELSQIGSAWFEEVVLIHNALPEIDLSEVDLTTRFLGAPVKAPFGIGAMTGGTELAGKINAELAKAAEEFGIPIYVGSQRIALVKPEVKWTFEVVKQNAPHVPKVANLGAPQLAELGERELEEWVVQAIDMIDAYAIAIHLNAAQEVVQPEGEPRFKGVLEKLKIVKRAAGKPLIVKETGNGISKEVAARLSGIADAIDVGGFGGTSFVAIEGARAKESPLQKRLAETYKWWGIPTAASICEVKSAYAGYLIASGGIRSGLDGAKAIALGANFFTMSQPLLKAALDGRLREEIAMIIAELKTAMFLTGARTVQELALVPRVYGPRLRNWIEQRRLTC.

6–7 (RK) provides a ligand contact to substrate. Residues 63 to 65 (AMT), Ser-93, and Asn-122 each bind FMN. 93 to 95 (SQR) is a binding site for substrate. Gln-160 is a substrate binding site. Glu-161 provides a ligand contact to Mg(2+). FMN-binding positions include Lys-192, Thr-221, 271–273 (GIR), and 292–293 (SQ).

It belongs to the IPP isomerase type 2 family. In terms of assembly, homooctamer. Dimer of tetramers. FMN is required as a cofactor. Requires NADPH as cofactor. The cofactor is Mg(2+).

It localises to the cytoplasm. It catalyses the reaction isopentenyl diphosphate = dimethylallyl diphosphate. Its function is as follows. Involved in the biosynthesis of isoprenoids. Catalyzes the 1,3-allylic rearrangement of the homoallylic substrate isopentenyl (IPP) to its allylic isomer, dimethylallyl diphosphate (DMAPP). The protein is Isopentenyl-diphosphate delta-isomerase of Pyrobaculum aerophilum (strain ATCC 51768 / DSM 7523 / JCM 9630 / CIP 104966 / NBRC 100827 / IM2).